Reading from the N-terminus, the 378-residue chain is Erythronate-4-phosphate dehydrogenase (378 aa).

The substrate site is built by Ser45 and Thr66. Residues Asp146 and Thr175 each coordinate NAD(+). The active site involves Arg208. Asp232 is an NAD(+) binding site. Residue Glu237 is part of the active site. Catalysis depends on His254, which acts as the Proton donor. Gly257 is an NAD(+) binding site. Tyr258 contacts substrate.

The protein belongs to the D-isomer specific 2-hydroxyacid dehydrogenase family. PdxB subfamily. As to quaternary structure, homodimer.

Its subcellular location is the cytoplasm. The enzyme catalyses 4-phospho-D-erythronate + NAD(+) = (R)-3-hydroxy-2-oxo-4-phosphooxybutanoate + NADH + H(+). It participates in cofactor biosynthesis; pyridoxine 5'-phosphate biosynthesis; pyridoxine 5'-phosphate from D-erythrose 4-phosphate: step 2/5. Its function is as follows. Catalyzes the oxidation of erythronate-4-phosphate to 3-hydroxy-2-oxo-4-phosphonooxybutanoate. The protein is Erythronate-4-phosphate dehydrogenase of Cronobacter sakazakii (strain ATCC BAA-894) (Enterobacter sakazakii).